The chain runs to 91 residues: Soluble cytochrome b558 (91 aa).

Residues 8–88 form the Cytochrome b5 heme-binding domain; it reads LPVFTLEQVA…LQRYLIGTLE (81 aa). Cys-25 and Cys-54 are oxidised to a cystine. Positions 43 and 71 each coordinate heme.

The protein is Soluble cytochrome b558 of Ectothiorhodospira shaposhnikovii (Ectothiorhodospira vacuolata).